Here is a 691-residue protein sequence, read N- to C-terminus: MKEIQAIYVDLKKLRNIGIMAHIDAGKTTTTERILFYTGRKHNIGSVDDGTATMDWMVQEKERGITIVSAATTCMWKDHRINIIDTPGHVDFTIEVERALRVLDGAVAVFDAAAGVEPQSETVWRQADKYNVPRIAFMNKMDKLGADFEMAVQTMVDRLKANPIPVQMPMGAEDSFEGVIDLIEMKAIRWLNENGTEMVYEEIPEKYRAKAEEMREDLLEKVAELDDEIMMLYLEGEEISNDLIKKALRKATIENKATPVFCGSAKMNRGVQPLLDGILEYLPSPLDMPPVRGWNQNGEEVQIKPSEDEPFTALAFKIQADPYVGKLTFFRVYSGRLEKGSYVYNSTKGKKERISRLIFMHADKREDVEYVRAGDIVAAIGLKDTKTGDTLCDEKRPVILEKMEFPEPVISIAIEPETKNDQDKLSKALTLLSDEDPSFRAYVDHETGETIISGMGELHLEIIVDRLKREFNTKVRVGQPQVAYRETIQEPAEAEGKYIRQSGGRGQYGHVIMRFEPIDLSKTFEFEDRIVGGVIPKEYIPAVEEGVREAAQSGVLAGYPMVGIKAILLDGSYHEVDSSEMAFKIAASMAFKEAVKKAKPILLEPIMRVEVTTPEEYMGNIIADLNSRRAHVETLESRGHLRIIKALVPLSEMFGYATDLRSLSQGRATYTMVLERYAKVPDKLAEKIISK.

The tr-type G domain occupies 12–286 (KKLRNIGIMA…GILEYLPSPL (275 aa)). GTP is bound by residues 21–28 (AHIDAGKT), 85–89 (DTPGH), and 139–142 (NKMD).

The protein belongs to the TRAFAC class translation factor GTPase superfamily. Classic translation factor GTPase family. EF-G/EF-2 subfamily.

It localises to the cytoplasm. Its function is as follows. Catalyzes the GTP-dependent ribosomal translocation step during translation elongation. During this step, the ribosome changes from the pre-translocational (PRE) to the post-translocational (POST) state as the newly formed A-site-bound peptidyl-tRNA and P-site-bound deacylated tRNA move to the P and E sites, respectively. Catalyzes the coordinated movement of the two tRNA molecules, the mRNA and conformational changes in the ribosome. In Thermosipho africanus (strain TCF52B), this protein is Elongation factor G.